The primary structure comprises 589 residues: Mini-chromosome maintenance complex-binding protein (589 aa).

Positions 163 to 211 (VDEEMTDSMDSSTLEAGRNGSPFKKMKVGEATSSASESQVPQTSGIPPA) are disordered. Residues 193-207 (ATSSASESQVPQTSG) are compositionally biased toward polar residues.

This sequence belongs to the MCMBP family. Interacts with the MCM complex.

It localises to the nucleus. Its function is as follows. Associated component of the MCM complex that acts as a regulator of DNA replication. Binds to the MCM complex during late S phase and may act by promoting the disassembly of the MCM complex from chromatin. Required for sister chromatid cohesion. This Arabidopsis thaliana (Mouse-ear cress) protein is Mini-chromosome maintenance complex-binding protein (ETG1).